A 578-amino-acid polypeptide reads, in one-letter code: Putative multidrug export ATP-binding/permease protein SAB1799c (578 aa).

The Cytoplasmic segment spans residues 1–15; that stretch reads MIKRYLQFVKPYKYR. A helical membrane pass occupies residues 16–36; it reads IFATIIVGIIKFGIPMLIPLL. In terms of domain architecture, ABC transmembrane type-1 spans 16 to 306; the sequence is IFATIIVGII…LVASFTTLTQ (291 aa). Residues 37 to 59 lie on the Extracellular side of the membrane; the sequence is IKYAIDGVINNHALTTDEKVHHL. Residues 60–80 form a helical membrane-spanning segment; the sequence is TIAIGIALFIFVIVRPPIEFI. Over 81 to 138 the chain is Cytoplasmic; it reads RQYLAQWTSNKILYDIRKKLYNHLQALSARFYANNQVGQVISRVINDVEQTKDFILTG. A helical membrane pass occupies residues 139 to 159; the sequence is LMNIWLDCITIIIALSIMFFL. Topologically, residues 160 to 162 are extracellular; it reads DVK. The helical transmembrane segment at 163–183 threads the bilayer; it reads LTLAALFIFPFYILTVYVFFG. Over 184–242 the chain is Cytoplasmic; the sequence is RLRKLTRERSQALAEVQGFLHERVQGISVVKSFAIEDNEAKNFDKKNANFLTRALKHTR. A helical transmembrane segment spans residues 243-262; sequence WNAYSFATINTVTDIGPIIV. The Extracellular segment spans residues 263–267; sequence IGVGA. Residues 268–287 form a helical membrane-spanning segment; it reads YLAISGSITVGTLAAFVGYL. Over 288–578 the chain is Cytoplasmic; it reads ELLFGPLRRL…YEHLYSIQNL (291 aa). Residues 340–575 enclose the ABC transporter domain; it reads IDIYHVNFQY…QGAYEHLYSI (236 aa). 374–381 lines the ATP pocket; sequence GMSGGGKS.

The protein belongs to the ABC transporter superfamily. As to quaternary structure, homodimer.

It is found in the cell membrane. In terms of biological role, may be involved in multidrug export. Transmembrane domains (TMD) form a pore in the cell membrane and the ATP-binding domain (NBD) is responsible for energy generation. The chain is Putative multidrug export ATP-binding/permease protein SAB1799c from Staphylococcus aureus (strain bovine RF122 / ET3-1).